We begin with the raw amino-acid sequence, 366 residues long: E3 ubiquitin-protein ligase SINA-like 1 (366 aa).

Residues 1–37 are disordered; it reads MVKGTNAEQALAREEASSSRPKRQRVPSIVEEEGENG. The RING-type; degenerate zinc finger occupies 56–92; sequence CPICCNALTIPIFQCDKGHIACSSCCTNVSNKCPYCS. The interval 106–354 is SBD; sequence VVEAFIVRCP…KGTYICIRSL (249 aa). An SIAH-type; degenerate zinc finger spans residues 109–232; the sequence is AFIVRCPIVA…LYSHYAANHK (124 aa). Residues Cys114, Cys186, His198, Cys202, Cys209, Cys214, His226, and His231 each contribute to the Zn(2+) site.

This sequence belongs to the SINA (Seven in absentia) family.

The enzyme catalyses S-ubiquitinyl-[E2 ubiquitin-conjugating enzyme]-L-cysteine + [acceptor protein]-L-lysine = [E2 ubiquitin-conjugating enzyme]-L-cysteine + N(6)-ubiquitinyl-[acceptor protein]-L-lysine.. It participates in protein modification; protein ubiquitination. Its function is as follows. E3 ubiquitin-protein ligase that mediates ubiquitination and subsequent proteasomal degradation of target proteins. E3 ubiquitin ligases accept ubiquitin from an E2 ubiquitin-conjugating enzyme in the form of a thioester and then directly transfers the ubiquitin to targeted substrates. It probably triggers the ubiquitin-mediated degradation of different substrates. This Arabidopsis thaliana (Mouse-ear cress) protein is E3 ubiquitin-protein ligase SINA-like 1.